Reading from the N-terminus, the 119-residue chain is NADH-quinone oxidoreductase subunit A (119 aa).

Helical transmembrane passes span 7 to 27, 63 to 83, and 88 to 108; these read YPVL…VSIG, LVAI…PWGV, and IGWP…LGFA.

This sequence belongs to the complex I subunit 3 family. As to quaternary structure, NDH-1 is composed of 14 different subunits. Subunits NuoA, H, J, K, L, M, N constitute the membrane sector of the complex.

It localises to the cell inner membrane. It carries out the reaction a quinone + NADH + 5 H(+)(in) = a quinol + NAD(+) + 4 H(+)(out). Its function is as follows. NDH-1 shuttles electrons from NADH, via FMN and iron-sulfur (Fe-S) centers, to quinones in the respiratory chain. The immediate electron acceptor for the enzyme in this species is believed to be ubiquinone. Couples the redox reaction to proton translocation (for every two electrons transferred, four hydrogen ions are translocated across the cytoplasmic membrane), and thus conserves the redox energy in a proton gradient. This chain is NADH-quinone oxidoreductase subunit A, found in Burkholderia mallei (strain NCTC 10247).